Reading from the N-terminus, the 455-residue chain is MYKHPWLPNLDLIDEMLKEIGVNSLDELFNDIPAEIKINRLLNVAKGKPLSEYEIEKEINEKVKKNVELQAPPFIGAGICPHYIPNVVKFIIGRSEFYTSYTPYQPEISQGLLQALFEYQSLMAELLDMDVVNASMYDWGSALAEAVLMANRINGKKTVLVPENANPFHKEVVRTWIGGKGIKIEEVKYDKNSGELDLEDLEKKSNIDDISAIYIQQPNFFGIFESNIEHVIDVAKHKRALSIVGVNLLSLGLIKPPGSYEADIVVGDGQELGLPLNFGGPLMGVFAVRWDMSLVRQMPGRIVGITKDTNGKMGFTLILQTREQFIKREKATSNITTNEALLAIANAVYLSLLGKEGMRELAEEIYFRSHYAAKKLTEIDNVSMPFRSDFFEEFAIRFPIEYDKISNKLKERKLQGGLKLSDYTSLFCVTEVHDKKSIDLLVSTIQEMINGVETS.

It belongs to the GcvP family. N-terminal subunit subfamily. The glycine cleavage system is composed of four proteins: P, T, L and H. In this organism, the P 'protein' is a heterodimer of two subunits.

The catalysed reaction is N(6)-[(R)-lipoyl]-L-lysyl-[glycine-cleavage complex H protein] + glycine + H(+) = N(6)-[(R)-S(8)-aminomethyldihydrolipoyl]-L-lysyl-[glycine-cleavage complex H protein] + CO2. Its function is as follows. The glycine cleavage system catalyzes the degradation of glycine. The P protein binds the alpha-amino group of glycine through its pyridoxal phosphate cofactor; CO(2) is released and the remaining methylamine moiety is then transferred to the lipoamide cofactor of the H protein. This chain is Probable glycine dehydrogenase (decarboxylating) subunit 1, found in Saccharolobus islandicus (strain M.16.27) (Sulfolobus islandicus).